Here is a 96-residue protein sequence, read N- to C-terminus: Probable RNA-binding protein YqeI (96 aa).

The 96-residue stretch at 1–96 folds into the CRM domain; that stretch reads MLTGKQKRFL…SKENKQIELP (96 aa).

The polypeptide is Probable RNA-binding protein YqeI (yqeI) (Bacillus subtilis (strain 168)).